We begin with the raw amino-acid sequence, 169 residues long: Allophycocyanin subunit beta-18 (169 aa).

N72 is modified (N4-methylasparagine). C82 contacts (2R,3E)-phycocyanobilin.

The protein belongs to the phycobiliprotein family. In terms of assembly, heterodimer of ApcE and this beta chain. Post-translationally, contains one covalently linked bilin chromophore. The chromophore is added by phycocyanobilin lyase CpcS 1.

It localises to the cellular thylakoid membrane. Its function is as follows. A variant beta-allophycocyanin (AP) which forms a complex with ApcE, a phycobilisome terminal emitter that influences energy transfer to photosystem II. The protein is Allophycocyanin subunit beta-18 (apcF) of Nostoc sp. (strain PCC 7120 / SAG 25.82 / UTEX 2576).